The primary structure comprises 352 residues: Histidinol-phosphate aminotransferase (352 aa).

Lys-221 carries the N6-(pyridoxal phosphate)lysine modification.

The protein belongs to the class-II pyridoxal-phosphate-dependent aminotransferase family. Histidinol-phosphate aminotransferase subfamily. As to quaternary structure, homodimer. The cofactor is pyridoxal 5'-phosphate.

The enzyme catalyses L-histidinol phosphate + 2-oxoglutarate = 3-(imidazol-4-yl)-2-oxopropyl phosphate + L-glutamate. It functions in the pathway amino-acid biosynthesis; L-histidine biosynthesis; L-histidine from 5-phospho-alpha-D-ribose 1-diphosphate: step 7/9. The sequence is that of Histidinol-phosphate aminotransferase from Staphylococcus aureus (strain Mu3 / ATCC 700698).